Reading from the N-terminus, the 178-residue chain is Interleukin-10 (178 aa).

Positions 1 to 18 are cleaved as a signal peptide; the sequence is MHSSALLCCLVLLTGVRA. Cystine bridges form between Cys30–Cys126 and Cys80–Cys132. Residue Asn134 is glycosylated (N-linked (GlcNAc...) asparagine).

It belongs to the IL-10 family. Homodimer. Interacts with IL10RA and IL10RB.

Its subcellular location is the secreted. Major immune regulatory cytokine that acts on many cells of the immune system where it has profound anti-inflammatory functions, limiting excessive tissue disruption caused by inflammation. Mechanistically, IL10 binds to its heterotetrameric receptor comprising IL10RA and IL10RB leading to JAK1 and STAT2-mediated phosphorylation of STAT3. In turn, STAT3 translocates to the nucleus where it drives expression of anti-inflammatory mediators. Targets antigen-presenting cells (APCs) such as macrophages and monocytes and inhibits their release of pro-inflammatory cytokines including granulocyte-macrophage colony-stimulating factor /GM-CSF, granulocyte colony-stimulating factor/G-CSF, IL-1 alpha, IL-1 beta, IL-6, IL-8 and TNF-alpha. Also interferes with antigen presentation by reducing the expression of MHC-class II and co-stimulatory molecules, thereby inhibiting their ability to induce T cell activation. In addition, controls the inflammatory response of macrophages by reprogramming essential metabolic pathways including mTOR signaling. The protein is Interleukin-10 (IL10) of Macaca mulatta (Rhesus macaque).